The sequence spans 309 residues: NmrA-like family domain-containing protein 1 (309 aa).

Residues 11–16, 37–41, 58–59, 79–81, Lys102, Lys143, and 165–168 each bind NADP(+); these read GATGAQ, RNPEQ, DQ, TNY, and YFEN. The tract at residues 163 to 199 is interaction with ASS1; the sequence is PCYFENLLSYFLPQKAADGKSFLLDLPMGDVPMDGMS.

This sequence belongs to the NmrA-type oxidoreductase family. In terms of assembly, homodimer. Interacts with ASS1. Interaction is enhanced by low NADPH/NADP(+) ratios, which results in inhibition of ASS1 activity.

The protein localises to the cytoplasm. Its subcellular location is the perinuclear region. It localises to the nucleus. Functionally, redox sensor protein. Undergoes restructuring and subcellular redistribution in response to changes in intracellular NADPH/NADP(+) levels. At low NADPH concentrations the protein is found mainly as a monomer, and binds argininosuccinate synthase (ASS1), the enzyme involved in nitric oxide synthesis. Association with ASS1 impairs its activity and reduces the production of nitric oxide, which subsecuently prevents apoptosis. Under normal NADPH concentrations, the protein is found as a dimer and hides the binding site for ASS1. The homodimer binds one molecule of NADPH. Has higher affinity for NADPH than for NADP(+). Binding to NADPH is necessary to form a stable dimer. The polypeptide is NmrA-like family domain-containing protein 1 (Nmral1) (Mus musculus (Mouse)).